We begin with the raw amino-acid sequence, 378 residues long: Flap endonuclease 1 (378 aa).

The tract at residues 1-105 (MGIKGLNSII…HELDKRTERR (105 aa)) is N-domain. Aspartate 34 is a Mg(2+) binding site. DNA is bound by residues arginine 47 and arginine 71. Aspartate 87, glutamate 156, glutamate 158, aspartate 177, and aspartate 179 together coordinate Mg(2+). The tract at residues 120-251 (EIMKHERRLV…VTALKLIKEH (132 aa)) is I-domain. DNA is bound at residue glutamate 156. DNA-binding residues include glycine 229 and aspartate 231. Aspartate 231 serves as a coordination point for Mg(2+). The tract at residues 337-345 (VQGRLDSFF) is interaction with PCNA. A compositionally biased stretch (low complexity) spans 356–367 (AASARKAQAAKK). Residues 356 to 378 (AASARKAQAAKKTNQKGKVLKRR) are disordered. Over residues 368–378 (TNQKGKVLKRR) the composition is skewed to basic residues.

The protein belongs to the XPG/RAD2 endonuclease family. FEN1 subfamily. As to quaternary structure, interacts with PCNA. Three molecules of FEN1 bind to one PCNA trimer with each molecule binding to one PCNA monomer. PCNA stimulates the nuclease activity without altering cleavage specificity. Mg(2+) serves as cofactor. Phosphorylated. Phosphorylation upon DNA damage induces relocalization to the nuclear plasma.

Its subcellular location is the nucleus. It localises to the nucleolus. The protein localises to the nucleoplasm. The protein resides in the mitochondrion. Structure-specific nuclease with 5'-flap endonuclease and 5'-3' exonuclease activities involved in DNA replication and repair. During DNA replication, cleaves the 5'-overhanging flap structure that is generated by displacement synthesis when DNA polymerase encounters the 5'-end of a downstream Okazaki fragment. It enters the flap from the 5'-end and then tracks to cleave the flap base, leaving a nick for ligation. Also involved in the long patch base excision repair (LP-BER) pathway, by cleaving within the apurinic/apyrimidinic (AP) site-terminated flap. Acts as a genome stabilization factor that prevents flaps from equilibrating into structures that lead to duplications and deletions. Also possesses 5'-3' exonuclease activity on nicked or gapped double-stranded DNA, and exhibits RNase H activity. Also involved in replication and repair of rDNA and in repairing mitochondrial DNA. This Eremothecium gossypii (strain ATCC 10895 / CBS 109.51 / FGSC 9923 / NRRL Y-1056) (Yeast) protein is Flap endonuclease 1.